We begin with the raw amino-acid sequence, 591 residues long: Probable translation initiation factor IF-2 (591 aa).

Residues 6–220 (IRTPIVCVMG…IMIGLAQRYM (215 aa)) form the tr-type G domain. The interval 15 to 22 (GHVDHGKT) is G1. Position 15 to 22 (15 to 22 (GHVDHGKT)) interacts with GTP. The interval 40–44 (AITQH) is G2. Positions 76 to 79 (DTPG) are G3. Residues 76 to 80 (DTPGH) and 130 to 133 (TKVD) each bind GTP. A G4 region spans residues 130 to 133 (TKVD). The segment at 198-200 (SAH) is G5.

Belongs to the TRAFAC class translation factor GTPase superfamily. Classic translation factor GTPase family. IF-2 subfamily.

Function in general translation initiation by promoting the binding of the formylmethionine-tRNA to ribosomes. Seems to function along with eIF-2. This Methanoregula boonei (strain DSM 21154 / JCM 14090 / 6A8) protein is Probable translation initiation factor IF-2.